The sequence spans 944 residues: Weak acid resistance protein 1 (944 aa).

The zn(2)-C6 fungal-type DNA-binding region spans 76 to 109 (CVCCHSLKQKCEPSDVNDIYRKPCRRCLKHKKLC). Disordered regions lie at residues 114–171 (SKRT…AKQF) and 197–225 (SYGA…SVPT). Threonine 128 is subject to Phosphothreonine. 2 stretches are compositionally biased toward polar residues: residues 135–144 (VNVSTKSKGP) and 205–225 (TTST…SVPT).

Homodimer. In terms of processing, phosphorylation is required for PDR12 induction.

The protein resides in the nucleus. In terms of biological role, transcription factor which binds to a weak acid response element (WARE) to mediate stress induction of PDR12 and FUN34, encoding an acid transporter and a putative ammonia transporter, respectively. The sequence is that of Weak acid resistance protein 1 (WAR1) from Saccharomyces cerevisiae (strain ATCC 204508 / S288c) (Baker's yeast).